Here is a 1190-residue protein sequence, read N- to C-terminus: Laminin subunit gamma-2 (1190 aa).

The N-terminal stretch at 1–21 is a signal peptide; that stretch reads MPALWLRCGLCLALLLPAARA. Disulfide bonds link cysteine 28–cysteine 37, cysteine 30–cysteine 53, cysteine 56–cysteine 65, cysteine 68–cysteine 81, cysteine 84–cysteine 96, cysteine 86–cysteine 102, cysteine 104–cysteine 113, cysteine 116–cysteine 128, cysteine 139–cysteine 150, cysteine 141–cysteine 155, cysteine 157–cysteine 166, and cysteine 169–cysteine 184. 3 Laminin EGF-like domains span residues 28–83, 84–130, and 139–186; these read CDCN…RCLP, CNCN…GCAQ, and CDCD…GCTQ. Residues 187-196 enclose the Laminin EGF-like 4; first part domain; it reads CFCYGHSASC. The region spanning 213–381 is the Laminin IV type A domain; the sequence is QDVDGWKAVQ…SGAPAPWVEQ (169 aa). Residues asparagine 342 and asparagine 362 are each glycosylated (N-linked (GlcNAc...) asparagine). Residues 382-415 enclose the Laminin EGF-like 4; second part domain; the sequence is CVCPVGYKGQFCQDCASGYKRDSARLGPFGTCIP. Laminin EGF-like domains follow at residues 416–462, 463–517, and 518–573; these read CNCQ…SCKP, CPCR…PCQP, and CQCN…KCRA. 11 disulfides stabilise this stretch: cysteine 463–cysteine 471, cysteine 465–cysteine 482, cysteine 485–cysteine 494, cysteine 497–cysteine 515, cysteine 518–cysteine 532, cysteine 520–cysteine 539, cysteine 542–cysteine 551, cysteine 554–cysteine 571, cysteine 574–cysteine 586, cysteine 576–cysteine 592, and cysteine 594–cysteine 603. The region spanning 574-603 is the Laminin EGF-like 8; truncated domain; that stretch reads CNCNPVGSEPVECRSDGSCVCKPGFGGLSC. A domain II and I region spans residues 604-1190; the sequence is EHAALTSCPA…CYNTQALEQQ (587 aa). Residues 613–718 adopt a coiled-coil conformation; the sequence is ACYNQVKVQM…GSQYQNQVQD (106 aa). Serine 803 carries O-linked (Xyl...) (chondroitin sulfate) serine glycosylation. Coiled-coil stretches lie at residues 809 to 1073 and 1114 to 1190; these read AVVQ…AVQM and EERL…LEQQ. 2 N-linked (GlcNAc...) asparagine glycosylation sites follow: asparagine 939 and asparagine 1030.

As to quaternary structure, laminin is a complex glycoprotein, consisting of three different polypeptide chains (alpha, beta, gamma), which are bound to each other by disulfide bonds into a cross-shaped molecule comprising one long and three short arms with globules at each end. Gamma-2 is a subunit of laminin-5 (laminin-332 or epiligrin/kalinin/nicein). Post-translationally, O-glycosylated; contains chondroitin sulfate (CS).

The protein localises to the secreted. The protein resides in the extracellular space. It localises to the extracellular matrix. It is found in the basement membrane. Its function is as follows. Binding to cells via a high affinity receptor, laminin is thought to mediate the attachment, migration and organization of cells into tissues during embryonic development by interacting with other extracellular matrix components. Ladsin exerts cell-scattering activity toward a wide variety of cells, including epithelial, endothelial, and fibroblastic cells. The sequence is that of Laminin subunit gamma-2 (LAMC2) from Equus caballus (Horse).